We begin with the raw amino-acid sequence, 247 residues long: Carboxy-S-adenosyl-L-methionine synthase (247 aa).

S-adenosyl-L-methionine is bound by residues tyrosine 39, 64–66 (GCS), 89–90 (DN), 117–118 (DI), asparagine 132, and arginine 199.

This sequence belongs to the class I-like SAM-binding methyltransferase superfamily. Cx-SAM synthase family. As to quaternary structure, homodimer.

The enzyme catalyses prephenate + S-adenosyl-L-methionine = carboxy-S-adenosyl-L-methionine + 3-phenylpyruvate + H2O. Catalyzes the conversion of S-adenosyl-L-methionine (SAM) to carboxy-S-adenosyl-L-methionine (Cx-SAM). This is Carboxy-S-adenosyl-L-methionine synthase from Escherichia coli O139:H28 (strain E24377A / ETEC).